The sequence spans 70 residues: Putative defensin-like protein 280 (70 aa).

The first 23 residues, 1 to 23 (MASIKHFFLVFICVSVLLTSGLA), serve as a signal peptide directing secretion. 3 disulfide bridges follow: Cys-30–Cys-53, Cys-39–Cys-65, and Cys-43–Cys-67.

This sequence belongs to the DEFL family.

The protein localises to the secreted. The protein is Putative defensin-like protein 280 of Arabidopsis thaliana (Mouse-ear cress).